The chain runs to 326 residues: Malate dehydrogenase (326 aa).

12-18 (GGTGQIA) contacts NAD(+). Positions 93 and 99 each coordinate substrate. NAD(+) contacts are provided by residues asparagine 106, glutamine 113, and 130-132 (VGN). The substrate site is built by asparagine 132 and arginine 163. Histidine 188 acts as the Proton acceptor in catalysis.

Belongs to the LDH/MDH superfamily. MDH type 2 family.

The enzyme catalyses (S)-malate + NAD(+) = oxaloacetate + NADH + H(+). In terms of biological role, catalyzes the reversible oxidation of malate to oxaloacetate. The polypeptide is Malate dehydrogenase (Chlamydia muridarum (strain MoPn / Nigg)).